Here is a 711-residue protein sequence, read N- to C-terminus: Polyribonucleotide nucleotidyltransferase (711 aa).

Mg(2+) is bound by residues Asp-486 and Asp-492. The KH domain maps to 553-612 (PRIHTIKINPDKIKDVIGKGGSVIRALTEETGTTIEIEDDGTVKIAATDGEKAKHAIRRI). The S1 motif domain maps to 622–690 (GRVYTGKVTR…RQGRIRLSIK (69 aa)). The interval 689 to 711 (IKEATEQSQPAAAPEAPAAEQGE) is disordered. Residues 694–711 (EQSQPAAAPEAPAAEQGE) are compositionally biased toward low complexity.

The protein belongs to the polyribonucleotide nucleotidyltransferase family. Component of the RNA degradosome, which is a multiprotein complex involved in RNA processing and mRNA degradation. It depends on Mg(2+) as a cofactor.

The protein resides in the cytoplasm. The catalysed reaction is RNA(n+1) + phosphate = RNA(n) + a ribonucleoside 5'-diphosphate. Its function is as follows. Involved in mRNA degradation. Catalyzes the phosphorolysis of single-stranded polyribonucleotides processively in the 3'- to 5'-direction. This chain is Polyribonucleotide nucleotidyltransferase, found in Escherichia coli (strain SE11).